The sequence spans 116 residues: Putative iron-sulfur cluster insertion protein ErpA (116 aa).

Residues Cys-44, Cys-108, and Cys-110 each contribute to the iron-sulfur cluster site.

This sequence belongs to the HesB/IscA family. In terms of assembly, homodimer. It depends on iron-sulfur cluster as a cofactor.

Functionally, required for insertion of 4Fe-4S clusters. The polypeptide is Putative iron-sulfur cluster insertion protein ErpA (Aromatoleum aromaticum (strain DSM 19018 / LMG 30748 / EbN1) (Azoarcus sp. (strain EbN1))).